Here is a 946-residue protein sequence, read N- to C-terminus: Probable outer membrane protein pmp18 (946 aa).

Positions 1-16 are cleaved as a signal peptide; the sequence is MQNNRSLSKSSFFVGA. The region spanning 668-946 is the Autotransporter domain; that stretch reads QGQIAPTASG…YLHAGTTFKF (279 aa).

The protein belongs to the PMP outer membrane protein family.

The protein resides in the secreted. Its subcellular location is the cell wall. The protein localises to the cell outer membrane. The sequence is that of Probable outer membrane protein pmp18 (pmp18) from Chlamydia pneumoniae (Chlamydophila pneumoniae).